The following is a 484-amino-acid chain: uncharacterized protein (484 aa).

One can recognise an FAD-binding PCMH-type domain in the interval 47-226 (TLPIPAAVVK…TEVTVKIFKF (180 aa)).

Belongs to the FAD-binding oxidoreductase/transferase type 4 family.

This is an uncharacterized protein from Escherichia coli (strain K12).